Consider the following 1066-residue polypeptide: TBC1 domain family member 31 (1066 aa).

WD repeat units follow at residues 33 to 74, 75 to 116, 117 to 157, 158 to 200, 201 to 248, 249 to 296, and 297 to 334; these read HNTS…LHGN, RFNL…TVTK, ELVS…LDTF, QRKR…CDTL, FCKY…ARQL, FRII…MQTC, and KLLF…NIYS. Residues 424–599 enclose the Rab-GAP TBC domain; it reads EYPTKYRMFI…KLFDNIFSNH (176 aa). Coiled-coil stretches lie at residues 728–861 and 914–948; these read QKQE…DLEE and NKCY…KWKE. Basic and acidic residues predominate over residues 989–998; it reads CHKEEPRFQN. The tract at residues 989-1020 is disordered; the sequence is CHKEEPRFQNEQDSSCLPRTSQLNDSSEMDPS. Positions 999-1020 are enriched in polar residues; that stretch reads EQDSSCLPRTSQLNDSSEMDPS. The mediates direct interaction with PJA2 stretch occupies residues 1053 to 1056; sequence RARH.

As to quaternary structure, interacts with PJA2; the interaction is direct and recruits PJA2 to centrosomes. Interacts with OFD1; regulates its activity in cilium assembly. Interacts with PRKACA.

The protein resides in the cytoplasm. The protein localises to the cytoskeleton. Its subcellular location is the microtubule organizing center. It localises to the centrosome. It is found in the centriolar satellite. The protein resides in the cilium basal body. Functionally, molecular adapter which is involved in cilium biogenesis. Part of a functional complex including OFD1 a centriolar protein involved in cilium assembly. Could regulate the cAMP-dependent phosphorylation of OFD1, and its subsequent ubiquitination by PJA2 which ultimately leads to its proteasomal degradation. In Homo sapiens (Human), this protein is TBC1 domain family member 31.